We begin with the raw amino-acid sequence, 36 residues long: Kappa-theraphotoxin-Pg1a (36 aa).

Cystine bridges form between Cys-4/Cys-19, Cys-11/Cys-24, and Cys-18/Cys-31.

Belongs to the neurotoxin 10 (Hwtx-1) family. 44 (Jztx-4) subfamily. Expressed by the venom gland.

It localises to the secreted. Its function is as follows. Gating modifier of Kv2.1/KCNB1 (IC(50)=5.1 nM), Kv2.2/KCNB2 and Kv4.3/KCND3 channels (IC(50)=39 nM). Acts by shifting the channel activation to more depolarized potentials by stabilizing the resting conformation of the voltage sensor. It completely inhibits opening of the Kv2.1/KCNB1 channel at negative membrane voltages and dramatically shifts channel activation to positive voltages. May act by partitioning into lipid membranes and then by binding the voltage sensor paddle of the channel from a place within the membrane. The chain is Kappa-theraphotoxin-Pg1a from Chilobrachys guangxiensis (Chinese earth tiger tarantula).